Consider the following 338-residue polypeptide: Anthranilate phosphoribosyltransferase (338 aa).

5-phospho-alpha-D-ribose 1-diphosphate contacts are provided by residues G78, 81–82 (GD), S86, 88–91 (NIST), 106–114 (KHGNKSVTS), and S118. An anthranilate-binding site is contributed by G78. A Mg(2+)-binding site is contributed by S90. Residue N109 coordinates anthranilate. R163 is a binding site for anthranilate. Residues D222 and E223 each coordinate Mg(2+).

Belongs to the anthranilate phosphoribosyltransferase family. In terms of assembly, homodimer. The cofactor is Mg(2+).

It carries out the reaction N-(5-phospho-beta-D-ribosyl)anthranilate + diphosphate = 5-phospho-alpha-D-ribose 1-diphosphate + anthranilate. Its pathway is amino-acid biosynthesis; L-tryptophan biosynthesis; L-tryptophan from chorismate: step 2/5. Functionally, catalyzes the transfer of the phosphoribosyl group of 5-phosphorylribose-1-pyrophosphate (PRPP) to anthranilate to yield N-(5'-phosphoribosyl)-anthranilate (PRA). This Staphylococcus saprophyticus subsp. saprophyticus (strain ATCC 15305 / DSM 20229 / NCIMB 8711 / NCTC 7292 / S-41) protein is Anthranilate phosphoribosyltransferase.